The primary structure comprises 242 residues: Pyridoxine 5'-phosphate synthase (242 aa).

A 3-amino-2-oxopropyl phosphate-binding site is contributed by Asn-6. Residue 8-9 (DH) participates in 1-deoxy-D-xylulose 5-phosphate binding. Arg-17 serves as a coordination point for 3-amino-2-oxopropyl phosphate. Catalysis depends on His-42, which acts as the Proton acceptor. Arg-44 and His-49 together coordinate 1-deoxy-D-xylulose 5-phosphate. Residue Glu-69 is the Proton acceptor of the active site. Thr-99 is a binding site for 1-deoxy-D-xylulose 5-phosphate. The active-site Proton donor is the His-193. Residues Gly-194 and 217-218 (GH) contribute to the 3-amino-2-oxopropyl phosphate site.

It belongs to the PNP synthase family. As to quaternary structure, homooctamer; tetramer of dimers.

The protein localises to the cytoplasm. The enzyme catalyses 3-amino-2-oxopropyl phosphate + 1-deoxy-D-xylulose 5-phosphate = pyridoxine 5'-phosphate + phosphate + 2 H2O + H(+). The protein operates within cofactor biosynthesis; pyridoxine 5'-phosphate biosynthesis; pyridoxine 5'-phosphate from D-erythrose 4-phosphate: step 5/5. In terms of biological role, catalyzes the complicated ring closure reaction between the two acyclic compounds 1-deoxy-D-xylulose-5-phosphate (DXP) and 3-amino-2-oxopropyl phosphate (1-amino-acetone-3-phosphate or AAP) to form pyridoxine 5'-phosphate (PNP) and inorganic phosphate. This is Pyridoxine 5'-phosphate synthase from Aquifex aeolicus (strain VF5).